The chain runs to 357 residues: MKFVDEAEIQVIAGNGGDGCVSFRREKFIPLGGPDGGDGGDGGSVWLVADENLNTLVDFRHERIFKAQRGVNGMGQQMYGKAGQDKIISVPIGTVVINVQTDEVIGDMVRHGDRLLVAKGGTGGLGNMHFKSSINRAPRQARPGEQGEERTLKLELKLLADIGMLGFPNVGKSTFIRAVSAATPKVADYPFTTLYPNLGVVKIEAYSSFVIADVPGLIEGAADGVGLGTQFLRHLQRTKLLLHMVDISATADAYGNEKVGVGLLPIEQVRKLEIELERHDPALLDKPRWLVLNKADLMPQEEAQALAEALIAELHWTAPWYLVSAVSREGTWPIMKSAMTLFEHQREVAAEQSVSSR.

An Obg domain is found at 1 to 159; it reads MKFVDEAEIQ…RTLKLELKLL (159 aa). The OBG-type G domain occupies 160–343; it reads ADIGMLGFPN…IMKSAMTLFE (184 aa). Residues 166-173, 191-195, 213-216, 293-296, and 324-326 each bind GTP; these read GFPNVGKS, FTTLY, DVPG, NKAD, and SAV. 2 residues coordinate Mg(2+): S173 and T193.

It belongs to the TRAFAC class OBG-HflX-like GTPase superfamily. OBG GTPase family. Monomer. Mg(2+) is required as a cofactor.

Its subcellular location is the cytoplasm. In terms of biological role, an essential GTPase which binds GTP, GDP and possibly (p)ppGpp with moderate affinity, with high nucleotide exchange rates and a fairly low GTP hydrolysis rate. Plays a role in control of the cell cycle, stress response, ribosome biogenesis and in those bacteria that undergo differentiation, in morphogenesis control. This Xylella fastidiosa (strain 9a5c) protein is GTPase Obg.